The sequence spans 357 residues: tRNA-specific 2-thiouridylase MnmA (357 aa).

ATP-binding positions include 10 to 17 and Ile36; that span reads GISGGVDS. The active-site Nucleophile is the Cys98. The cysteines at positions 98 and 194 are disulfide-linked. Gly122 is an ATP binding site. The interaction with tRNA stretch occupies residues 144-146; that stretch reads KDQ. Cys194 acts as the Cysteine persulfide intermediate in catalysis. Residues 303–304 form an interaction with tRNA region; that stretch reads RY.

The protein belongs to the MnmA/TRMU family.

The protein resides in the cytoplasm. It carries out the reaction S-sulfanyl-L-cysteinyl-[protein] + uridine(34) in tRNA + AH2 + ATP = 2-thiouridine(34) in tRNA + L-cysteinyl-[protein] + A + AMP + diphosphate + H(+). Functionally, catalyzes the 2-thiolation of uridine at the wobble position (U34) of tRNA, leading to the formation of s(2)U34. In Chlorobium phaeovibrioides (strain DSM 265 / 1930) (Prosthecochloris vibrioformis (strain DSM 265)), this protein is tRNA-specific 2-thiouridylase MnmA.